The following is a 248-amino-acid chain: 1-(5-phosphoribosyl)-5-[(5-phosphoribosylamino)methylideneamino] imidazole-4-carboxamide isomerase (248 aa).

D11 serves as the catalytic Proton acceptor. Residue D132 is the Proton donor of the active site.

The protein belongs to the HisA/HisF family.

It is found in the cytoplasm. The catalysed reaction is 1-(5-phospho-beta-D-ribosyl)-5-[(5-phospho-beta-D-ribosylamino)methylideneamino]imidazole-4-carboxamide = 5-[(5-phospho-1-deoxy-D-ribulos-1-ylimino)methylamino]-1-(5-phospho-beta-D-ribosyl)imidazole-4-carboxamide. It functions in the pathway amino-acid biosynthesis; L-histidine biosynthesis; L-histidine from 5-phospho-alpha-D-ribose 1-diphosphate: step 4/9. This chain is 1-(5-phosphoribosyl)-5-[(5-phosphoribosylamino)methylideneamino] imidazole-4-carboxamide isomerase, found in Bradyrhizobium diazoefficiens (strain JCM 10833 / BCRC 13528 / IAM 13628 / NBRC 14792 / USDA 110).